The sequence spans 399 residues: Ubiquitin-like modifier-activating enzyme 5 (399 aa).

ATP-binding residues include glycine 76, aspartate 97, lysine 120, asparagine 143, and asparagine 177. Positions 219 and 222 each coordinate Zn(2+). Cysteine 243 functions as the Glycyl thioester intermediate in the catalytic mechanism. Cysteine 296 and cysteine 301 together coordinate Zn(2+).

This sequence belongs to the ubiquitin-activating E1 family. UBA5 subfamily.

In terms of biological role, E1-like enzyme which activates UFM1. The protein is Ubiquitin-like modifier-activating enzyme 5 of Drosophila mojavensis (Fruit fly).